The sequence spans 119 residues: Protein TusC (119 aa).

The protein belongs to the DsrF/TusC family. In terms of assembly, heterohexamer, formed by a dimer of trimers. The hexameric TusBCD complex contains 2 copies each of TusB, TusC and TusD. The TusBCD complex interacts with TusE.

Its subcellular location is the cytoplasm. Its function is as follows. Part of a sulfur-relay system required for 2-thiolation of 5-methylaminomethyl-2-thiouridine (mnm(5)s(2)U) at tRNA wobble positions. This is Protein TusC from Serratia proteamaculans (strain 568).